Here is a 115-residue protein sequence, read N- to C-terminus: Probable prefoldin subunit 1 (115 aa).

Belongs to the prefoldin subunit beta family. As to quaternary structure, heterohexamer of two PFD-alpha type and four PFD-beta type subunits.

Binds specifically to cytosolic chaperonin (c-CPN) and transfers target proteins to it. Binds to nascent polypeptide chain and promotes folding in an environment in which there are many competing pathways for nonnative proteins. The polypeptide is Probable prefoldin subunit 1 (pfdn1) (Dictyostelium discoideum (Social amoeba)).